The chain runs to 224 residues: UPF0758 protein SPO0054 (224 aa).

The MPN domain occupies 102–224 (VISSWDALLD…ELSFRAEGYL (123 aa)). Positions 173, 175, and 186 each coordinate Zn(2+). The short motif at 173–186 (HNHPSGDPTPSQSD) is the JAMM motif element.

Belongs to the UPF0758 family.

In Ruegeria pomeroyi (strain ATCC 700808 / DSM 15171 / DSS-3) (Silicibacter pomeroyi), this protein is UPF0758 protein SPO0054.